Here is a 363-residue protein sequence, read N- to C-terminus: Aspartate carbamoyltransferase, chloroplastic (363 aa).

The disordered stretch occupies residues 1-21 (MAAARATLPLPRVPAPSPRPQ). Residues 1–36 (MAAARATLPLPRVPAPSPRPQLRPFPSLPARRGAVA) constitute a chloroplast transit peptide. A compositionally biased stretch (pro residues) spans 11-21 (PRVPAPSPRPQ). Carbamoyl phosphate-binding residues include Arg109 and Thr110. UMP is bound by residues Arg109 and Thr110. Lys139 lines the L-aspartate pocket. Carbamoyl phosphate-binding residues include Arg160, His188, and Gln191. The UMP site is built by Arg160 and His188. Positions 221 and 283 each coordinate UMP. Arg221 and Arg283 together coordinate L-aspartate. Carbamoyl phosphate is bound by residues Leu323 and Pro324.

This sequence belongs to the aspartate/ornithine carbamoyltransferase superfamily. ATCase family. In terms of assembly, homotrimer.

The protein localises to the plastid. It is found in the chloroplast. It carries out the reaction carbamoyl phosphate + L-aspartate = N-carbamoyl-L-aspartate + phosphate + H(+). It functions in the pathway pyrimidine metabolism; UMP biosynthesis via de novo pathway; (S)-dihydroorotate from bicarbonate: step 2/3. Feedback inhibited by UMP. Functionally, catalyzes the condensation of carbamoyl phosphate and aspartate to form carbamoyl aspartate and inorganic phosphate, the committed step in the de novo pyrimidine nucleotide biosynthesis pathway. This chain is Aspartate carbamoyltransferase, chloroplastic (PYRB), found in Oryza sativa subsp. japonica (Rice).